Consider the following 307-residue polypeptide: 4-hydroxybenzoate octaprenyltransferase (307 aa).

The next 7 helical transmembrane spans lie at 27–47 (AGWL…AGGF), 50–70 (WHLL…GCCI), 101–121 (LAVG…TNAL), 142–162 (CVAM…PMAF), 179–199 (AAVP…VLAY), 239–259 (LLAW…AAGL), and 285–305 (FRLN…DLGW).

The protein belongs to the UbiA prenyltransferase family. Mg(2+) is required as a cofactor.

It localises to the cell inner membrane. The catalysed reaction is all-trans-octaprenyl diphosphate + 4-hydroxybenzoate = 4-hydroxy-3-(all-trans-octaprenyl)benzoate + diphosphate. It functions in the pathway cofactor biosynthesis; ubiquinone biosynthesis. Catalyzes the prenylation of para-hydroxybenzoate (PHB) with an all-trans polyprenyl group. Mediates the second step in the final reaction sequence of ubiquinone-8 (UQ-8) biosynthesis, which is the condensation of the polyisoprenoid side chain with PHB, generating the first membrane-bound Q intermediate 3-octaprenyl-4-hydroxybenzoate. In Methylibium petroleiphilum (strain ATCC BAA-1232 / LMG 22953 / PM1), this protein is 4-hydroxybenzoate octaprenyltransferase.